Here is a 250-residue protein sequence, read N- to C-terminus: DNA polymerase sliding clamp (250 aa).

It belongs to the PCNA family. In terms of assembly, homotrimer. The subunits circularize to form a toroid; DNA passes through its center. Replication factor C (RFC) is required to load the toroid on the DNA.

In terms of biological role, sliding clamp subunit that acts as a moving platform for DNA processing. Responsible for tethering the catalytic subunit of DNA polymerase and other proteins to DNA during high-speed replication. The polypeptide is DNA polymerase sliding clamp (Methanococcus maripaludis (strain C5 / ATCC BAA-1333)).